A 67-amino-acid chain; its full sequence is Sec-independent protein translocase protein TatA (67 aa).

A helical transmembrane segment spans residues 1 to 21 (MFGIGIQELLVVLVLVLLVFG). Residues 46–67 (PDEIDITPGKKNGKTDKDDKQA) are disordered. Basic and acidic residues predominate over residues 58–67 (GKTDKDDKQA).

Belongs to the TatA/E family. As to quaternary structure, the Tat system comprises two distinct complexes: a TatABC complex, containing multiple copies of TatA, TatB and TatC subunits, and a separate TatA complex, containing only TatA subunits. Substrates initially bind to the TatABC complex, which probably triggers association of the separate TatA complex to form the active translocon.

The protein localises to the cell inner membrane. Part of the twin-arginine translocation (Tat) system that transports large folded proteins containing a characteristic twin-arginine motif in their signal peptide across membranes. TatA could form the protein-conducting channel of the Tat system. The protein is Sec-independent protein translocase protein TatA of Nitratidesulfovibrio vulgaris (strain DSM 19637 / Miyazaki F) (Desulfovibrio vulgaris).